We begin with the raw amino-acid sequence, 43 residues long: Mu-conotoxin-like Cal 12.2c (43 aa).

A propeptide is located at residue arginine 1. 4 cysteine pairs are disulfide-bonded: cysteine 4–cysteine 16, cysteine 11–cysteine 24, cysteine 18–cysteine 29, and cysteine 23–cysteine 35. A 6'-bromotryptophan modification is found at tryptophan 31. Residue proline 36 is modified to 4-hydroxyproline. Tryptophan 40 carries the post-translational modification 6'-bromotryptophan.

In terms of tissue distribution, expressed by the venom duct.

It is found in the secreted. Functionally, mu-conotoxins block voltage-gated sodium channels. This toxin reversibly blocks voltage-gated sodium channel in cephalopods, with no alteration in the voltage dependence of sodium conductance or on the kinetics of inactivation. This is Mu-conotoxin-like Cal 12.2c from Californiconus californicus (California cone).